The primary structure comprises 1247 residues: MFARKQSGAAPFGAMPVPDQPPSASEKNSSLSPGLNTSNGDGSETETTSAILASVKEQELQFERLTRELEAERQIVASQLERCKLGSETGSMSSISSAGEQFHWQTQDGQKDIEDELTTGLELVDSCIRSLQESGILDPQDYSTSERPSLLSQSALQLNSKPEGSFQYPASYHSNQTLALGDTAPSQLPARSTQARAAGQSFSQGTTGRAGHLAGSEPAPPPPPPREPFAPSLGSAFHLPDAPPAAAALYYSSSTLPAPPRGGSPLTTTQGGSPTKLQRGGSAPEGAAYAAPRGSSPKQSPSRLAKSYSTSSPINIVVSSAGLSPIRVTSPPTVQSTISSSPIHQLSSTIGTYATLSPTKRLVHASEQYSKHSQELYATATLQRPGSLAAGSRASYSSQHGHLAPELRALQSPEHHIDPIYEDRVYQKPPMRSLSQSQGDPLPPAHTGTFRTSTAPSSPGVDSVPLQRTGSQHGPQNAAAATFQRASYAAGPASNYADPYRQLQYCASVDSPYSKSGPALPPEGTLARSPSIDSIQKDPREFGWRDPELPEVIQMLQHQFPSVQSNAAAYLQHLCFGDNKIKAEIRRQGGIQLLVDLLDHRMTEVHRSACGALRNLVYGKANDDNKIALKNCGGIPALVRLLRKTTDLEIRELVTGVLWNLSSCDALKMPIIQDALAVLTNAVIIPHSGWENSPLQDDRKIQLHSSQVLRNATGCLRNVSSAGEEARRRMRECDGLTDALLYVIQSALGSSEIDSKTVENCVCILRNLSYRLAAETSQGQHMGTDELDGLLCGETNGKDTESSGCWGKKKKKKKSQDQWDGVGPLPDCAEPPKGIQMLWHPSIVKPYLTLLSECSNPDTLEGAAGALQNLAAGSWKGWAEDVAGMAYALRSLPEGAPCLPQWSVYIRAAVRKEKGLPILVELLRIDNDRVVCAVATALRNMALDVRNKELIGKYAMRDLVHRLPGGNNSNNSGSKAMSDDTVTAVCCTLHEVITKNMENAKALRDAGGIEKLVGISKSKGDKHSPKVVKAASQVLNSMWQYRDLRSLYKKDGWSQYHFVASSSTIERDRQRPYSSSRTPSISPVRVSPNNRSASAPASPREMISLKERKTDYESAGNNATYHGTKGEHTSRKDTMTAQNTGVSTLYRNSYGAPAEDIKQNQVSTQPVPQEPSRKDYETYQPFPNSTRNYDESFFEDQVHHRPPASEYTMHLGLKSTGNYVDFYSAARPYSELNYETSHYPASPDSWV.

3 disordered regions span residues Met1–Ala50, Ser134–His238, and Leu256–Ser309. Position 7 is a phosphoserine (Ser7). Residues Pro22–Ala50 are compositionally biased toward polar residues. The stretch at Ser49 to Lys84 forms a coiled coil. The span at Ser149–Ser160 shows a compositional bias: low complexity. Positions Tyr172–Thr207 are enriched in polar residues. Arg209 carries the omega-N-methylarginine modification. The segment covering Pro218 to Pro228 has biased composition (pro residues). Arg261 bears the Omega-N-methylarginine mark. A phosphoserine mark is found at Ser264 and Ser273. Polar residues predominate over residues Pro265–Lys276. Omega-N-methylarginine occurs at positions 279 and 293. Residues Ser296 to Ser309 show a composition bias toward polar residues. Ser324, Ser357, Ser412, and Ser458 each carry phosphoserine. Residues Gly391–Ser433 form an ARM 1 repeat. The interval Pro429–Ala480 is disordered. The segment covering Leu466–Pro475 has biased composition (polar residues). A Phosphoserine modification is found at Ser511. At Tyr513 the chain carries Phosphotyrosine. Residues Ser514 to Asp533 are disordered. 8 ARM repeats span residues Lys537–Phe576, Asn579–Tyr618, Asp623–Ser663, Leu679–Ser721, Glu725–Tyr770, Pro832–Ala872, Val904–Leu943, and Met997–Gln1040. 2 disordered regions span residues Thr1064–Arg1131 and Ala1152–Tyr1176. Positions Pro1072 to Ile1081 are enriched in polar residues. Phosphoserine occurs at positions 1087 and 1098. Over residues Ser1087–Arg1100 the composition is skewed to low complexity. A compositionally biased stretch (basic and acidic residues) spans Ile1103–Tyr1112.

Belongs to the beta-catenin family. As to quaternary structure, binds to E-cadherin at a juxtamembrane site within the cytoplasmic domain. Binds to PSEN1. Interacts with PDZD2. Interacts (via the extreme C-terminus) with FRMPD2 (via the PDZ 2 domain). Interacts with ZBTB33. Interacts with ARHGEF28. Interacts with CDK5. Interacts with CTNNB1. Interacts with GSK3A and GSK3B. Interacts with DNM2. Interacts with CCDC85B. O-glycosylated. In terms of processing, phosphorylated by CDK5. Phosphorylated by GSK3B. In terms of tissue distribution, expressed in neurons and glial cells. Isoform 2 was found to be the most predominant isoform in various brain regions. Expressed at neuromuscular junctions.

Its subcellular location is the nucleus. It localises to the cell junction. It is found in the adherens junction. The protein localises to the cell projection. The protein resides in the dendrite. Its subcellular location is the perikaryon. Has a critical role in neuronal development, particularly in the formation and/or maintenance of dendritic spines and synapses. Involved in the regulation of canonical Wnt signaling. It probably acts on beta-catenin turnover, facilitating beta-catenin interaction with GSK3B, phosphorylation, ubiquitination and degradation. May be involved in neuronal cell adhesion and tissue morphogenesis and integrity by regulating adhesion molecules. Functions as a transcriptional activator when bound to ZBTB33. This is Catenin delta-2 (Ctnnd2) from Mus musculus (Mouse).